A 147-amino-acid polypeptide reads, in one-letter code: Hemoglobin subunit gamma (147 aa).

One can recognise a Globin domain in the interval 3-147 (NFTAEDKAAI…VASALASRYH (145 aa)). Heme b is bound by residues His-64 and His-93.

The protein belongs to the globin family. Heterotetramer of two alpha chains and two gamma chains in fetal hemoglobin (Hb F). As to expression, red blood cells.

Functionally, gamma chains make up the fetal hemoglobin F, in combination with alpha chains. The chain is Hemoglobin subunit gamma (HBG1) from Callithrix jacchus (White-tufted-ear marmoset).